Consider the following 728-residue polypeptide: Catalase-peroxidase (728 aa).

A cross-link (tryptophyl-tyrosyl-methioninium (Trp-Tyr) (with M-244)) is located at residues 91-218 (WHSAGTYRTA…LAAVQMGLIY (128 aa)). His92 functions as the Proton acceptor in the catalytic mechanism. The segment at residues 218–244 (YVNPEGPDGNPDPVAAARDIRDTFARM) is a cross-link (tryptophyl-tyrosyl-methioninium (Tyr-Met) (with W-91)). Position 259 (His259) interacts with heme b.

It belongs to the peroxidase family. Peroxidase/catalase subfamily. As to quaternary structure, homodimer or homotetramer. It depends on heme b as a cofactor. Formation of the three residue Trp-Tyr-Met cross-link is important for the catalase, but not the peroxidase activity of the enzyme.

The enzyme catalyses H2O2 + AH2 = A + 2 H2O. The catalysed reaction is 2 H2O2 = O2 + 2 H2O. Bifunctional enzyme with both catalase and broad-spectrum peroxidase activity. This Burkholderia thailandensis (strain ATCC 700388 / DSM 13276 / CCUG 48851 / CIP 106301 / E264) protein is Catalase-peroxidase.